Here is a 510-residue protein sequence, read N- to C-terminus: Probable gamma-aminobutyrate transaminase 3, mitochondrial (510 aa).

The transit peptide at 1-41 directs the protein to the mitochondrion; that stretch reads MICRSLLLLRSNAASKASNIVKHVAATGCLPKYSSEAPARY. 166–167 provides a ligand contact to pyridoxal 5'-phosphate; it reads GS. Y199 provides a ligand contact to substrate. Position 306 (D306) interacts with pyridoxal 5'-phosphate. Position 335 (K335) interacts with substrate. An N6-(pyridoxal phosphate)lysine modification is found at K335.

The protein belongs to the class-III pyridoxal-phosphate-dependent aminotransferase family.

The protein localises to the mitochondrion. It catalyses the reaction 4-aminobutanoate + pyruvate = succinate semialdehyde + L-alanine. The enzyme catalyses 4-aminobutanoate + glyoxylate = succinate semialdehyde + glycine. Its function is as follows. Transaminase that degrades gamma-amino butyric acid (GABA). This Oryza sativa subsp. japonica (Rice) protein is Probable gamma-aminobutyrate transaminase 3, mitochondrial.